The primary structure comprises 241 residues: Homeobox protein TGIF2LX (241 aa).

2 disordered regions span residues 1–58 (MEAA…GNLP) and 125–207 (KTGK…ELVS). Over residues 10–39 (ETQSPVQKDSPAKTQSPAQDTSIMSRNNAD) the composition is skewed to polar residues. The segment at residues 48–111 (EHKKKRKGNL…INARRRILPD (64 aa)) is a DNA-binding region (homeobox; TALE-type).

It belongs to the TALE/TGIF homeobox family.

The protein resides in the nucleus. May have a transcription role in testis. The chain is Homeobox protein TGIF2LX (TGIF2LX) from Pan troglodytes (Chimpanzee).